Reading from the N-terminus, the 199-residue chain is Protein-methionine-sulfoxide reductase heme-binding subunit MsrQ (199 aa).

4 helical membrane passes run 10–30 (WLKVCLHLAGFLPLLWLFWAI), 82–102 (LWCFVWATLHLTSYALLELGI), 116–136 (PYLTLGIISWLVLLALTLTST), and 153–173 (VVYLVAILAPIHYLWSVKILS).

It belongs to the MsrQ family. Heterodimer of a catalytic subunit (MsrP) and a heme-binding subunit (MsrQ). FMN serves as cofactor. It depends on heme b as a cofactor.

Its subcellular location is the cell inner membrane. Functionally, part of the MsrPQ system that repairs oxidized periplasmic proteins containing methionine sulfoxide residues (Met-O), using respiratory chain electrons. Thus protects these proteins from oxidative-stress damage caused by reactive species of oxygen and chlorine generated by the host defense mechanisms. MsrPQ is essential for the maintenance of envelope integrity under bleach stress, rescuing a wide series of structurally unrelated periplasmic proteins from methionine oxidation, including the primary periplasmic chaperone SurA and the lipoprotein Pal. MsrQ provides electrons for reduction to the reductase catalytic subunit MsrP, using the quinone pool of the respiratory chain. This Salmonella dublin (strain CT_02021853) protein is Protein-methionine-sulfoxide reductase heme-binding subunit MsrQ.